The chain runs to 242 residues: Type III pantothenate kinase (242 aa).

6–13 (DIGNSVAK) is an ATP binding site. Residues tyrosine 86 and 93–96 (GMDR) each bind substrate. Residue aspartate 95 is the Proton acceptor of the active site. Position 116 (aspartate 116) interacts with K(+). ATP is bound at residue threonine 119. Threonine 171 is a binding site for substrate.

The protein belongs to the type III pantothenate kinase family. Homodimer. NH4(+) is required as a cofactor. The cofactor is K(+).

It is found in the cytoplasm. It catalyses the reaction (R)-pantothenate + ATP = (R)-4'-phosphopantothenate + ADP + H(+). It functions in the pathway cofactor biosynthesis; coenzyme A biosynthesis; CoA from (R)-pantothenate: step 1/5. Its function is as follows. Catalyzes the phosphorylation of pantothenate (Pan), the first step in CoA biosynthesis. The sequence is that of Type III pantothenate kinase from Phocaeicola vulgatus (strain ATCC 8482 / DSM 1447 / JCM 5826 / CCUG 4940 / NBRC 14291 / NCTC 11154) (Bacteroides vulgatus).